We begin with the raw amino-acid sequence, 125 residues long: SOSS complex subunit C homolog B (125 aa).

Disordered stretches follow at residues 44 to 73 (PAPQ…RAAF) and 105 to 125 (PATP…NNPK).

It belongs to the SOSS-C family.

The protein is SOSS complex subunit C homolog B of Drosophila willistoni (Fruit fly).